The primary structure comprises 346 residues: Dihydroorotase (346 aa).

The Zn(2+) site is built by H13 and H15. Substrate is bound by residues 15 to 17 and N41; that span reads HLR. K99, H136, and H174 together coordinate Zn(2+). K99 is modified (N6-carboxylysine). H136 serves as a coordination point for substrate. L219 lines the substrate pocket. Residue D247 participates in Zn(2+) binding. D247 is a catalytic residue. H251 and A263 together coordinate substrate.

It belongs to the metallo-dependent hydrolases superfamily. DHOase family. Class II DHOase subfamily. Homodimer. Zn(2+) is required as a cofactor.

It catalyses the reaction (S)-dihydroorotate + H2O = N-carbamoyl-L-aspartate + H(+). The protein operates within pyrimidine metabolism; UMP biosynthesis via de novo pathway; (S)-dihydroorotate from bicarbonate: step 3/3. In terms of biological role, catalyzes the reversible cyclization of carbamoyl aspartate to dihydroorotate. The chain is Dihydroorotase from Rhizobium leguminosarum bv. trifolii (strain WSM2304).